The primary structure comprises 244 residues: Ribonuclease PH (244 aa).

Residues Arg-86 and Gly-124 to Arg-126 contribute to the phosphate site.

The protein belongs to the RNase PH family. Homohexameric ring arranged as a trimer of dimers.

The enzyme catalyses tRNA(n+1) + phosphate = tRNA(n) + a ribonucleoside 5'-diphosphate. Phosphorolytic 3'-5' exoribonuclease that plays an important role in tRNA 3'-end maturation. Removes nucleotide residues following the 3'-CCA terminus of tRNAs; can also add nucleotides to the ends of RNA molecules by using nucleoside diphosphates as substrates, but this may not be physiologically important. Probably plays a role in initiation of 16S rRNA degradation (leading to ribosome degradation) during starvation. This is Ribonuclease PH from Glaesserella parasuis serovar 5 (strain SH0165) (Haemophilus parasuis).